We begin with the raw amino-acid sequence, 342 residues long: Glucan endo-1,3-beta-glucosidase (342 aa).

Positions 1–26 (MLASSPMLLFLLSLLMAYNFDTTAGQ) are cleaved as a signal peptide. The active-site Proton donor is the Glu-119. Glu-261 acts as the Nucleophile in catalysis.

This sequence belongs to the glycosyl hydrolase 17 family. In terms of processing, the N-terminus is blocked.

The protein resides in the vacuole. The catalysed reaction is Hydrolysis of (1-&gt;3)-beta-D-glucosidic linkages in (1-&gt;3)-beta-D-glucans.. Functionally, is thought to be an important plant defense-related product against fungal pathogens. Accumulation of the glucanase can be detected as early as 4 hours after inoculation. The polypeptide is Glucan endo-1,3-beta-glucosidase (BGL) (Brassica campestris (Field mustard)).